Consider the following 602-residue polypeptide: SAGA complex subunit SPT8 (602 aa).

Residues 1–141 (MDEVDDILIN…REASSSTHEA (141 aa)) are disordered. Composition is skewed to acidic residues over residues 14–23 (VDDEEDDEEM) and 36–75 (EGND…DGED). At Thr-85 the chain carries Phosphothreonine. Ser-108, Ser-123, and Ser-131 each carry phosphoserine. WD repeat units follow at residues 173–212 (PIQT…EGKL) and 305–346 (GHTQ…NEFK). A disordered region spans residues 366 to 418 (VSGNVNSGKENENADDDMDSLFGDEDEDEKQDAGNEPVETGDGSNGEENKEQI). Residues 378–395 (NADDDMDSLFGDEDEDEK) are compositionally biased toward acidic residues. WD repeat units lie at residues 415-454 (KEQI…SPAL), 506-544 (SISG…DASN), and 560-600 (HHGG…YDID). Ser-451 is modified (phosphoserine).

The protein belongs to the WD repeat SPT8 family. As to quaternary structure, component of the 1.8 MDa SAGA (Spt-Ada-Gcn5 acetyltransferase) complex, which is composed of 19 subunits TRA1, SPT7, TAF5, NGG1/ADA3, SGF73, SPT20/ADA5, SPT8, TAF12, TAF6, HFI1/ADA1, UBP8, GCN5, ADA2, SPT3, SGF29, TAF10, TAF9, SGF11 and SUS1. The SAGA complex is composed of 4 modules, namely the HAT (histone acetyltransferase) module (GCN5, ADA2, NGG1/ADA3 and SGF29), the DUB (deubiquitinating) module (UBP8, SGF11, SGF73 and SUS1), the core or TAF (TBP-associated factor) module (TAF5, TAF6, TAF9, TAF10 and TAF12), and the Tra1 or SPT (Suppressor of Ty) module (TRA1, HFI1/ADA1, SPT3, SPT7, SPT8 and SPT20/ADA5). The Tra1/SPT module binds activators, the core module recruits TBP (TATA-binding protein), the HAT module contains the histone H3 acetyltransferase GCN5, and the DUB module comprises the histone H2B deubiquitinase UBP8.

It is found in the nucleus. Functionally, component of the transcription coactivator SAGA complex. SAGA acts as a general cofactor required for essentially all RNA polymerase II transcription. At the promoters, SAGA is required for transcription pre-initiation complex (PIC) recruitment. It influences RNA polymerase II transcriptional activity through different activities such as TBP interaction (via core/TAF module) and promoter selectivity, interaction with transcription activators (via Tra1/SPT module), and chromatin modification through histone acetylation (via HAT module) and deubiquitination (via DUB module). SAGA preferentially acetylates histones H3 (to form H3K9ac, H3K14ac, H3K18ac and H3K23ac) and H2B and deubiquitinates histone H2B. SAGA interacts with DNA via upstream activating sequences (UASs). During SAGA-mediated transcriptional inhibition, SPT3 and SPT8 prevent binding of TBP to the TATA box. The polypeptide is SAGA complex subunit SPT8 (SPT8) (Saccharomyces cerevisiae (strain ATCC 204508 / S288c) (Baker's yeast)).